A 220-amino-acid chain; its full sequence is Protein-L-isoaspartate O-methyltransferase (220 aa).

Ser69 is a catalytic residue.

This sequence belongs to the methyltransferase superfamily. L-isoaspartyl/D-aspartyl protein methyltransferase family.

The protein resides in the cytoplasm. It catalyses the reaction [protein]-L-isoaspartate + S-adenosyl-L-methionine = [protein]-L-isoaspartate alpha-methyl ester + S-adenosyl-L-homocysteine. Its function is as follows. Catalyzes the methyl esterification of L-isoaspartyl residues in peptides and proteins that result from spontaneous decomposition of normal L-aspartyl and L-asparaginyl residues. It plays a role in the repair and/or degradation of damaged proteins. This Alcanivorax borkumensis (strain ATCC 700651 / DSM 11573 / NCIMB 13689 / SK2) protein is Protein-L-isoaspartate O-methyltransferase.